We begin with the raw amino-acid sequence, 1369 residues long: Serine/threonine-protein kinase SIK3 (1369 aa).

Residues 26–55 are disordered; that stretch reads LLPPPAAGPPAAPAAVPPAAVPARPTAPAS. The segment covering 27–45 has biased composition (pro residues); the sequence is LPPPAAGPPAAPAAVPPAA. The span at 46 to 55 shows a compositional bias: low complexity; sequence VPARPTAPAS. The Protein kinase domain maps to 66 to 317; sequence YEIDRTIGKG…MEQICRHKWM (252 aa). At Thr71 the chain carries Phosphothreonine. ATP is bound by residues 72-80 and Lys95; that span reads IGKGNFAVV. Asp188 acts as the Proton acceptor in catalysis. Thr221 carries the post-translational modification Phosphothreonine. The region spanning 344-384 is the UBA domain; that stretch reads PLNDDVLLAMEDMGLDKERTLQSLRSDAYDHYSAIYSLLCD. Position 469 is a phosphothreonine (Thr469). Ser551, Ser591, Ser592, Ser674, and Ser695 each carry phosphoserine. Residues 775–821 are disordered; sequence IQPSSPPPNHPSNHLFRQPSNSPPPVSSAMITSHGATSPSQFQGLPS. The segment covering 803 to 818 has biased composition (polar residues); it reads AMITSHGATSPSQFQG. Position 914 is a phosphoserine (Ser914). Residues 942–993 are disordered; that stretch reads LFSDQSRGSPSSYSPSTGVGFPPTQALKVPPLDQFPTFPPSAQQQPPHYTTS. Positions 944–957 are enriched in low complexity; that stretch reads SDQSRGSPSSYSPS. Positions 981 to 993 are enriched in polar residues; that stretch reads PSAQQQPPHYTTS. The residue at position 1026 (Ser1026) is a Phosphoserine. Arg1034 carries the omega-N-methylarginine modification. The disordered stretch occupies residues 1314-1338; it reads DEEDEECGVSLGHEHPGLGDGSQHL.

The protein belongs to the protein kinase superfamily. CAMK Ser/Thr protein kinase family. SNF1 subfamily. In terms of assembly, binds to and is activated by YWHAZ when phosphorylated on Thr-221. Interacts with 14-3-3 proteins. Interacts with HDAC4; this interaction leads to HDAC4 retention in the cytoplasm. Interacts with DEPTOR, MLST8/GbetaL, RICTOR and RPTOR. Mg(2+) is required as a cofactor. Phosphorylated at Thr-221 by STK11/LKB1 in complex with STE20-related adapter-alpha (STRADA) pseudo kinase and CAB39. As to expression, expressed in hypertrophic chondrocytes in the growth plate.

The protein localises to the cytoplasm. The catalysed reaction is L-seryl-[protein] + ATP = O-phospho-L-seryl-[protein] + ADP + H(+). It catalyses the reaction L-threonyl-[protein] + ATP = O-phospho-L-threonyl-[protein] + ADP + H(+). Its activity is regulated as follows. Activated by phosphorylation on Thr-221. In terms of biological role, positive regulator of mTOR signaling that functions by triggering the degradation of DEPTOR, an mTOR inhibitor. Required for chondrocyte hypertrophy during skeletogenesis. Negatively regulates cAMP signaling pathway possibly by acting on CRTC2/TORC2 and CRTC3/TORC3. Prevents HDAC4 translocation to the nucleus. This chain is Serine/threonine-protein kinase SIK3 (Sik3), found in Mus musculus (Mouse).